Consider the following 93-residue polypeptide: Acylphosphatase (93 aa).

One can recognise an Acylphosphatase-like domain in the interval 6-93 (RARIVVSGRV…GDLGAFEIRF (88 aa)). Residues R21 and N39 contribute to the active site.

This sequence belongs to the acylphosphatase family.

The enzyme catalyses an acyl phosphate + H2O = a carboxylate + phosphate + H(+). The polypeptide is Acylphosphatase (acyP) (Anaeromyxobacter dehalogenans (strain 2CP-C)).